Consider the following 378-residue polypeptide: MHPDQKKTFKEKNDIRKKLFNSTKEERLDWRKMKDEKKRKNEEKIIKEAEEAKKAKIEKVDHTPPFTISIAVPGQFLNNAQSAELRTYMAGQIARAATLYRVDEIIIYDESCRMTDEAVNAYYNGTWQGNLIPAETNYEGCFYLAKILEYLECPQYLRKDLFPIQKPLKNAGLLNPLDAQHHLKYDEKTLRFREGVVLKKRSKDGRGPICNIGLEKEFEIDSDAVQLPPYTRVTVEIKNLTEQCKLYRGSITSGATVTRETGLYWGYSVRLMTGLQKVLQAKKFDIVAGVSPRGKLASQMDVCILNKPKILLVFGGVAGVDAAVESEELAEWRRAEDAFDVLIRTTSLSNGSRSERVEENVLSVLAQVQCHLETLNAL.

Belongs to the class IV-like SAM-binding methyltransferase superfamily.

The protein localises to the cytoplasm. It localises to the cytoskeleton. It is found in the spindle. Its subcellular location is the chromosome. The protein resides in the centromere. The protein localises to the kinetochore. It localises to the microtubule organizing center. It is found in the centrosome. Required for association of the centrosomes with the poles of the bipolar mitotic spindle during metaphase. This chain is Putative methyltransferase spot-1, found in Caenorhabditis elegans.